The chain runs to 383 residues: Trihelix transcription factor ASIL1 (383 aa).

Disordered stretches follow at residues 1-32 (MEDDDEIQSIPSPGDSSLSPQAPPSPPILPTN), 61-94 (HTPSVTGGGGSGNRNGRGGGGGSGGGGGGRDDCW), 189-295 (IASS…SGVG), and 346-383 (EITQNNQEEEERSRQRGERRIVDDDDDRNGKNNGNVSS). Gly residues predominate over residues 66 to 88 (TGGGGSGNRNGRGGGGGSGGGGG). Positions 94 to 153 (WSEEATKVLIEAWGDRFSEPGKGTLKQQHWKEVAEIVNKSRQCKYPKTDIQCKNRIDTVK) constitute a Myb-like domain. Residues 206–225 (NSRSSMFKRQTKGNQIVQQQ) are compositionally biased toward polar residues. Basic and acidic residues predominate over residues 226-235 (QEKRGSDSMR). The Bipartite nuclear localization signal signature appears at 228–241 (KRGSDSMRWHFRKR). Positions 246-262 (TESESDPEPEASPEESA) are enriched in acidic residues. Low complexity predominate over residues 263–274 (ESLPPLQPIQPL). Residues 304–365 (FTEAYEKAET…ERSRQRGERR (62 aa)) adopt a coiled-coil conformation. Residues 356 to 367 (ERSRQRGERRIV) show a composition bias toward basic and acidic residues.

It localises to the nucleus. Functionally, transcription repressor that binds specific DNA sequence such as the GT-box-like motif 5'-CGTGATT-3' in the AT2S3 promoter. Negative regulator of seed maturation genes during seed germination and seedling development. May target GT-box-containing embryonic genes by competing with the binding of transcriptional activators to this promoter region. Contributes to the maintenance and control of seed filling and may repress the maturation program during early embryogenesis. The protein is Trihelix transcription factor ASIL1 of Arabidopsis thaliana (Mouse-ear cress).